A 578-amino-acid polypeptide reads, in one-letter code: Isocitrate dehydrogenase kinase/phosphatase (578 aa).

Residues 315-321 (APGIRGM) and lysine 336 each bind ATP. Aspartate 371 is an active-site residue.

This sequence belongs to the AceK family.

The protein resides in the cytoplasm. The enzyme catalyses L-seryl-[isocitrate dehydrogenase] + ATP = O-phospho-L-seryl-[isocitrate dehydrogenase] + ADP + H(+). Functionally, bifunctional enzyme which can phosphorylate or dephosphorylate isocitrate dehydrogenase (IDH) on a specific serine residue. This is a regulatory mechanism which enables bacteria to bypass the Krebs cycle via the glyoxylate shunt in response to the source of carbon. When bacteria are grown on glucose, IDH is fully active and unphosphorylated, but when grown on acetate or ethanol, the activity of IDH declines drastically concomitant with its phosphorylation. In Escherichia coli O157:H7, this protein is Isocitrate dehydrogenase kinase/phosphatase.